A 514-amino-acid chain; its full sequence is Cobyric acid synthase (514 aa).

The GATase cobBQ-type domain maps to 263 to 457; sequence ALDVAVIRLP…LHGIFDNDPL (195 aa). Residue cysteine 344 is the Nucleophile of the active site. The active site involves histidine 449.

Belongs to the CobB/CobQ family. CobQ subfamily.

The protein operates within cofactor biosynthesis; adenosylcobalamin biosynthesis. In terms of biological role, catalyzes amidations at positions B, D, E, and G on adenosylcobyrinic A,C-diamide. NH(2) groups are provided by glutamine, and one molecule of ATP is hydrogenolyzed for each amidation. This Desulfitobacterium hafniense (strain DSM 10664 / DCB-2) protein is Cobyric acid synthase.